Here is a 448-residue protein sequence, read N- to C-terminus: Late embryogenesis abundant protein ECP63 (448 aa).

Composition is skewed to basic and acidic residues over residues 282-326 (TEEA…EEAG) and 334-354 (QKTR…KDSA). 2 disordered regions span residues 282–360 (TEEA…RGNE) and 411–448 (SKPG…KGKL). Positions 297-331 (KENMEKAGEVTRQKMEEMRLEGKELKEEAGAKAQE) form a coiled coil. Polar residues predominate over residues 420–432 (LKASDQMTGQTFN). Residues 435–448 (GRMDDDARKDKGKL) are compositionally biased toward basic and acidic residues.

This sequence belongs to the LEA type 4 family. Expressed in mature seeds.

May be involved in the BHLH109-mediated regulation of somatic embryogenesis. The polypeptide is Late embryogenesis abundant protein ECP63 (Arabidopsis thaliana (Mouse-ear cress)).